The sequence spans 556 residues: Potassium-transporting ATPase potassium-binding subunit (556 aa).

The next 10 membrane-spanning stretches (helical) occupy residues Ala6 to Gly26, Ser65 to Gly85, Gly133 to Val153, Leu176 to Ile196, Pro249 to Pro269, Val283 to Leu303, Gly378 to Gly398, Leu415 to Met435, Ala483 to Ala503, and Phe526 to Leu546.

It belongs to the KdpA family. As to quaternary structure, the system is composed of three essential subunits: KdpA, KdpB and KdpC.

It localises to the cell membrane. Its function is as follows. Part of the high-affinity ATP-driven potassium transport (or Kdp) system, which catalyzes the hydrolysis of ATP coupled with the electrogenic transport of potassium into the cytoplasm. This subunit binds the extracellular potassium ions and delivers the ions to the membrane domain of KdpB through an intramembrane tunnel. The polypeptide is Potassium-transporting ATPase potassium-binding subunit (Mycolicibacterium smegmatis (strain ATCC 700084 / mc(2)155) (Mycobacterium smegmatis)).